A 508-amino-acid chain; its full sequence is Splicing regulatory glutamine/lysine-rich protein 1 (508 aa).

The 77-residue stretch at 66–142 (RTVYVGNLNS…RPLKINHSNN (77 aa)) folds into the RRM domain. Residues Ser-171 and Ser-184 each carry the phosphoserine modification. The tract at residues 173–508 (ISAAIEPESG…ENLSTKTEAV (336 aa)) is disordered. Residues 180-189 (ESGKSNERKG) show a composition bias toward basic and acidic residues. Positions 190–259 (GRSRSHTRSK…KSRSRSHSRD (70 aa)) are enriched in basic residues. Residues 260 to 355 (KRKDTREKIK…DRSKEIDEKR (96 aa)) show a composition bias toward basic and acidic residues. The residue at position 363 (Thr-363) is a Phosphothreonine. A compositionally biased stretch (basic residues) spans 372–388 (RRSRSSSRERRRRRSRS). The span at 419 to 488 (REKERDHISE…DAPRTEENKI (70 aa)) shows a compositional bias: basic and acidic residues. Residues 489-508 (QHNGNCQLNEENLSTKTEAV) show a composition bias toward polar residues. Lys-504 is covalently cross-linked (Glycyl lysine isopeptide (Lys-Gly) (interchain with G-Cter in SUMO2)).

This sequence belongs to the splicing factor SR family. Homodimer. Binds SFRS1, SFRS2, SFRS3 and SFRS6. Interacts with the spliceosome. Interacts with SREK1IP1.

The protein localises to the nucleus. Participates in the regulation of alternative splicing by modulating the activity of other splice facors. Inhibits the splicing activity of SFRS1, SFRS2 and SFRS6. Augments the splicing activity of SFRS3. This chain is Splicing regulatory glutamine/lysine-rich protein 1 (SREK1), found in Homo sapiens (Human).